Here is a 188-residue protein sequence, read N- to C-terminus: Probable RNA 2'-phosphotransferase (188 aa).

This sequence belongs to the KptA/TPT1 family.

Its function is as follows. Removes the 2'-phosphate from RNA via an intermediate in which the phosphate is ADP-ribosylated by NAD followed by a presumed transesterification to release the RNA and generate ADP-ribose 1''-2''-cyclic phosphate (APPR&gt;P). May function as an ADP-ribosylase. This chain is Probable RNA 2'-phosphotransferase, found in Pseudomonas savastanoi pv. phaseolicola (strain 1448A / Race 6) (Pseudomonas syringae pv. phaseolicola (strain 1448A / Race 6)).